The sequence spans 251 residues: Mediator of RNA polymerase II transcription subunit 7 (251 aa).

Positions 1-38 are disordered; it reads MLPGFGAQTVSPFPNPPEYASAYTSDRINNGSAPPPPH. The segment covering 22-32 has biased composition (polar residues); sequence AYTSDRINNGS.

Belongs to the Mediator complex subunit 7 family. As to quaternary structure, component of the Mediator complex. Interacts with mdt-10 and mdt-21. Interacts with RNA polymerase II.

Its subcellular location is the nucleus. In terms of biological role, component of the Mediator complex, a coactivator involved in the regulated transcription of nearly all RNA polymerase II-dependent genes. Mediator functions as a bridge to convey information from gene-specific regulatory proteins to the basal RNA polymerase II transcription machinery. Mediator is recruited to promoters by direct interactions with regulatory proteins and serves as a scaffold for the assembly of a functional preinitiation complex with RNA polymerase II and the general transcription factors. Required for germ cell development and gonadal growth. In Caenorhabditis elegans, this protein is Mediator of RNA polymerase II transcription subunit 7 (let-49).